The following is a 321-amino-acid chain: Holliday junction branch migration complex subunit RuvB (321 aa).

Residues 1 to 173 (MMMEQECVDD…FGIISRLEFY (173 aa)) form a large ATPase domain (RuvB-L) region. ATP-binding positions include Ile-12, Arg-13, Gly-54, Lys-57, Thr-58, Thr-59, 120-122 (EDF), Arg-163, Tyr-173, and Arg-210. Position 58 (Thr-58) interacts with Mg(2+). A small ATPAse domain (RuvB-S) region spans residues 174–244 (TPAELACIVK…LASDALARMD (71 aa)). A head domain (RuvB-H) region spans residues 247–321 (ELGLDQMDRK…KAYRHMNLLA (75 aa)). Arg-302 and Arg-307 together coordinate DNA.

It belongs to the RuvB family. As to quaternary structure, homohexamer. Forms an RuvA(8)-RuvB(12)-Holliday junction (HJ) complex. HJ DNA is sandwiched between 2 RuvA tetramers; dsDNA enters through RuvA and exits via RuvB. An RuvB hexamer assembles on each DNA strand where it exits the tetramer. Each RuvB hexamer is contacted by two RuvA subunits (via domain III) on 2 adjacent RuvB subunits; this complex drives branch migration. In the full resolvosome a probable DNA-RuvA(4)-RuvB(12)-RuvC(2) complex forms which resolves the HJ.

It localises to the cytoplasm. It catalyses the reaction ATP + H2O = ADP + phosphate + H(+). The RuvA-RuvB-RuvC complex processes Holliday junction (HJ) DNA during genetic recombination and DNA repair, while the RuvA-RuvB complex plays an important role in the rescue of blocked DNA replication forks via replication fork reversal (RFR). RuvA specifically binds to HJ cruciform DNA, conferring on it an open structure. The RuvB hexamer acts as an ATP-dependent pump, pulling dsDNA into and through the RuvAB complex. RuvB forms 2 homohexamers on either side of HJ DNA bound by 1 or 2 RuvA tetramers; 4 subunits per hexamer contact DNA at a time. Coordinated motions by a converter formed by DNA-disengaged RuvB subunits stimulates ATP hydrolysis and nucleotide exchange. Immobilization of the converter enables RuvB to convert the ATP-contained energy into a lever motion, pulling 2 nucleotides of DNA out of the RuvA tetramer per ATP hydrolyzed, thus driving DNA branch migration. The RuvB motors rotate together with the DNA substrate, which together with the progressing nucleotide cycle form the mechanistic basis for DNA recombination by continuous HJ branch migration. Branch migration allows RuvC to scan DNA until it finds its consensus sequence, where it cleaves and resolves cruciform DNA. This is Holliday junction branch migration complex subunit RuvB from Oleidesulfovibrio alaskensis (strain ATCC BAA-1058 / DSM 17464 / G20) (Desulfovibrio alaskensis).